Here is a 348-residue protein sequence, read N- to C-terminus: dTDP-glucose 4,6-dehydratase (348 aa).

NAD(+)-binding positions include 15-16 (FI), 37-40 (DKLT), 62-63 (DI), and 82-86 (YAAES). Substrate is bound by residues S86 and N88. T101 contributes to the NAD(+) binding site. Position 125 (T125) interacts with substrate. The Proton donor role is filled by D126. Active-site proton acceptor residues include E127 and Y161. 161–165 (YSSTK) is a binding site for NAD(+). N190 is a binding site for substrate. N191 serves as a coordination point for NAD(+). Residues 200 to 205 (KFIPRQ), 216 to 218 (KLY), R225, N260, and 283 to 287 (DRAGH) each bind substrate.

Belongs to the NAD(P)-dependent epimerase/dehydratase family. dTDP-glucose dehydratase subfamily. In terms of assembly, homodimer. Requires NAD(+) as cofactor.

It carries out the reaction dTDP-alpha-D-glucose = dTDP-4-dehydro-6-deoxy-alpha-D-glucose + H2O. The protein operates within carbohydrate biosynthesis; dTDP-L-rhamnose biosynthesis. Its function is as follows. Catalyzes the dehydration of dTDP-D-glucose to form dTDP-6-deoxy-D-xylo-4-hexulose via a three-step process involving oxidation, dehydration and reduction. The sequence is that of dTDP-glucose 4,6-dehydratase (rmlB) from Streptococcus mutans serotype c (strain ATCC 700610 / UA159).